A 168-amino-acid polypeptide reads, in one-letter code: ATP synthase F(1) complex subunit delta, mitochondrial (168 aa).

The transit peptide at 1–22 (MLPAALLRRPGLGRLVRHARAY) directs the protein to the mitochondrion. Residues K136 and K165 each carry the N6-acetyllysine; alternate modification. 2 positions are modified to N6-succinyllysine; alternate: K136 and K165.

Belongs to the ATPase epsilon chain family. Component of the ATP synthase complex composed at least of ATP5F1A/subunit alpha, ATP5F1B/subunit beta, ATP5MC1/subunit c (homooctomer), MT-ATP6/subunit a, MT-ATP8/subunit 8, ATP5ME/subunit e, ATP5MF/subunit f, ATP5MG/subunit g, ATP5MK/subunit k, ATP5MJ/subunit j, ATP5F1C/subunit gamma, ATP5F1D/subunit delta, ATP5F1E/subunit epsilon, ATP5PF/subunit F6, ATP5PB/subunit b, ATP5PD/subunit d, ATP5PO/subunit OSCP. ATP synthase complex consists of a soluble F(1) head domain (subunits alpha(3) and beta(3)) - the catalytic core - and a membrane F(0) domain - the membrane proton channel (subunits c, a, 8, e, f, g, k and j). These two domains are linked by a central stalk (subunits gamma, delta, and epsilon) rotating inside the F1 region and a stationary peripheral stalk (subunits F6, b, d, and OSCP). Component of a complex composed at least by ATPIF1, ATP5F1A, ATP5F1B, ATP5F1C AND ATP5F1E.

It localises to the mitochondrion. Its subcellular location is the mitochondrion inner membrane. Functionally, subunit delta, of the mitochondrial membrane ATP synthase complex (F(1)F(0) ATP synthase or Complex V) that produces ATP from ADP in the presence of a proton gradient across the membrane which is generated by electron transport complexes of the respiratory chain. ATP synthase complex consist of a soluble F(1) head domain - the catalytic core - and a membrane F(1) domain - the membrane proton channel. These two domains are linked by a central stalk rotating inside the F(1) region and a stationary peripheral stalk. During catalysis, ATP synthesis in the catalytic domain of F(1) is coupled via a rotary mechanism of the central stalk subunits to proton translocation. In vivo, can only synthesize ATP although its ATP hydrolase activity can be activated artificially in vitro. With the central stalk subunit gamma, is essential for the biogenesis of F(1) catalytic part of the ATP synthase complex namely in the formation of F1 assembly intermediate. The protein is ATP synthase F(1) complex subunit delta, mitochondrial of Homo sapiens (Human).